The following is a 635-amino-acid chain: 1-deoxy-D-xylulose-5-phosphate synthase (635 aa).

Residues His72 and 113 to 115 contribute to the thiamine diphosphate site; that span reads GHA. Asp144 is a binding site for Mg(2+). Thiamine diphosphate is bound by residues 145 to 146, Asn174, Tyr286, and Glu369; that span reads GA. Mg(2+) is bound at residue Asn174.

The protein belongs to the transketolase family. DXPS subfamily. In terms of assembly, homodimer. It depends on Mg(2+) as a cofactor. Thiamine diphosphate serves as cofactor.

The enzyme catalyses D-glyceraldehyde 3-phosphate + pyruvate + H(+) = 1-deoxy-D-xylulose 5-phosphate + CO2. Its pathway is metabolic intermediate biosynthesis; 1-deoxy-D-xylulose 5-phosphate biosynthesis; 1-deoxy-D-xylulose 5-phosphate from D-glyceraldehyde 3-phosphate and pyruvate: step 1/1. Functionally, catalyzes the acyloin condensation reaction between C atoms 2 and 3 of pyruvate and glyceraldehyde 3-phosphate to yield 1-deoxy-D-xylulose-5-phosphate (DXP). The polypeptide is 1-deoxy-D-xylulose-5-phosphate synthase (Acaryochloris marina (strain MBIC 11017)).